Here is an 82-residue protein sequence, read N- to C-terminus: ATP synthase subunit c, chloroplastic (82 aa).

The next 2 membrane-spanning stretches (helical) occupy residues 7–27 (AASV…PGIG) and 57–77 (LAFM…LLFA).

It belongs to the ATPase C chain family. As to quaternary structure, F-type ATPases have 2 components, F(1) - the catalytic core - and F(0) - the membrane proton channel. F(1) has five subunits: alpha(3), beta(3), gamma(1), delta(1), epsilon(1). F(0) has four main subunits: a(1), b(1), b'(1) and c(10-14). The alpha and beta chains form an alternating ring which encloses part of the gamma chain. F(1) is attached to F(0) by a central stalk formed by the gamma and epsilon chains, while a peripheral stalk is formed by the delta, b and b' chains.

Its subcellular location is the plastid. The protein resides in the chloroplast thylakoid membrane. Functionally, f(1)F(0) ATP synthase produces ATP from ADP in the presence of a proton or sodium gradient. F-type ATPases consist of two structural domains, F(1) containing the extramembraneous catalytic core and F(0) containing the membrane proton channel, linked together by a central stalk and a peripheral stalk. During catalysis, ATP synthesis in the catalytic domain of F(1) is coupled via a rotary mechanism of the central stalk subunits to proton translocation. Key component of the F(0) channel; it plays a direct role in translocation across the membrane. A homomeric c-ring of between 10-14 subunits forms the central stalk rotor element with the F(1) delta and epsilon subunits. This is ATP synthase subunit c, chloroplastic from Guillardia theta (Cryptophyte).